A 611-amino-acid chain; its full sequence is MSKIIGIDLGTTNSCVSVLEGGEPKVIPNPEGNRTTPSVVAFKNGERQVGEVAKRQSVTNPNTIISIKSKMGTAEKVTVEDKDYTPQEVSAMILQYLKGYAEDYLGEKVTKAVITVPAYFNDAQRQATKDAGKIAGLEVERIINEPTAAALAYGLDKQDQDQKVLVFDLGGGTFDVSILELGDGVFEVLATAGDNKLGGDDFDDAIIEYLVAEFKKENGIDLSKDKMAMQRLKDAAEKAKKDLSGVTSTQISLPFITAGEAGPLHLEISLTRAKFDEITLPLVNRTVGPVRQALSDAGLSTSEIDQVILVGGSTRIPAVQEAVRKETNKEPHRGVNPDEVVAMGAAVQGGVLTGDVKDVVLLDVTPLSLGIETMGGVFTKLIDRNTTIPTSKSQVFSTAADNQPAVDIHVLQGERSMAADNKTLGRFQLADIPPAPRGVPQIEVTFDIDKNGIVSVKAKDLGTNKEQTIVIQSDSGLSEAEIERMVKDAEANADADAKRKEEADLRNEADQLVFQVDKTITDLGEQITEDEKKSVEDARDELKKALEAGELEGIKAAKEKLEGVLQPLVMKVYEQAAAAAQAAQGGEADAGAGKKDDGVVDADFEEVKDDK.

At Thr-173 the chain carries Phosphothreonine; by autocatalysis. The segment covering 577–591 (AAAAQAAQGGEADAG) has biased composition (low complexity). The interval 577 to 611 (AAAAQAAQGGEADAGAGKKDDGVVDADFEEVKDDK) is disordered. A compositionally biased stretch (acidic residues) spans 599–611 (VVDADFEEVKDDK).

It belongs to the heat shock protein 70 family.

Acts as a chaperone. The protein is Chaperone protein DnaK of Lysinibacillus sphaericus (strain C3-41).